A 273-amino-acid chain; its full sequence is MPLSASLLGKNSTYKDSYDATLLFKIPRINNRNELGINSNNLPFYGVDIWNTYELSCLNKNGKPWVGVGTFYIPTDSENIVESKSFKLYLNSFNNFVVESIEELERIILQDLSNVTHAKVTGQIFPINTKIEFGLPSGKNIDDLNIECNNYCPPDNSLIEYEDVLVEEEINSNLLKSNCLVTGQPDWGTIVIKYRGKKLKHDSFLKYLISFRNYNEFAEQCAERIFTDINNSINPDFLSIYIVYTRRGGIDICPYRSLDQNYNLPSNKRLIRQ.

81–83 contacts substrate; that stretch reads VES. An NADPH-binding site is contributed by 83 to 84; it reads SK. Catalysis depends on Cys179, which acts as the Thioimide intermediate. The active-site Proton donor is the Asp186. 218 to 219 contacts substrate; sequence AE. Residue 247–248 participates in NADPH binding; sequence RG.

Belongs to the GTP cyclohydrolase I family. QueF type 2 subfamily. Homodimer.

Its subcellular location is the cytoplasm. It carries out the reaction 7-aminomethyl-7-carbaguanine + 2 NADP(+) = 7-cyano-7-deazaguanine + 2 NADPH + 3 H(+). It functions in the pathway tRNA modification; tRNA-queuosine biosynthesis. Functionally, catalyzes the NADPH-dependent reduction of 7-cyano-7-deazaguanine (preQ0) to 7-aminomethyl-7-deazaguanine (preQ1). The chain is NADPH-dependent 7-cyano-7-deazaguanine reductase from Rickettsia canadensis (strain McKiel).